The primary structure comprises 427 residues: uncharacterized protein (427 aa).

Belongs to the CAF1 family.

This is an uncharacterized protein from Schizosaccharomyces pombe (strain 972 / ATCC 24843) (Fission yeast).